A 784-amino-acid polypeptide reads, in one-letter code: Serine/threonine-protein kinase DCLK2 (784 aa).

Positions 1–45 (MASTRSIELEHFEERDKRPRPGSRRGAPSSSGGSSSSGPKGNGLI) are disordered. Over residues 7–19 (IELEHFEERDKRP) the composition is skewed to basic and acidic residues. Low complexity predominate over residues 24 to 39 (RRGAPSSSGGSSSSGP). T61 carries the phosphothreonine modification. Doublecortin domains lie at 72–158 (KKAR…VDYT) and 197–280 (KLVT…AQDD). Composition is skewed to low complexity over residues 300 to 312 (AVKYSGSKSPGPS) and 341 to 364 (TPSSQLSTPKSTKSSSSSPTSPGS). The segment at 300–368 (AVKYSGSKSP…PTSPGSFRGL (69 aa)) is disordered. S379 bears the Phosphoserine mark. The Protein kinase domain occupies 411-668 (YKIGKVIGDG…AGEILSHPWV (258 aa)). Residues 417-425 (IGDGNFAVV) and K440 each bind ATP. Catalysis depends on D532, which acts as the Proton acceptor. S664 is modified (phosphoserine). The residue at position 683 (T683) is a Phosphothreonine. The segment at 724 to 784 (CQDSSRPGME…RAGTWRRHRD (61 aa)) is disordered. Residues 741–758 (SASAEEPPVSAPAAAPAP) show a composition bias toward low complexity.

The protein belongs to the protein kinase superfamily. CAMK Ser/Thr protein kinase family. CaMK subfamily. Binds to and stabilizes microtubules. Interacts with MAPK8IP1/JIP-1, MAPK8IP2/JIP-2, MAPK9/JNK2, PPP1R9B/NEURABIN-2 and actin. In terms of processing, autophosphorylated.

The protein resides in the cytoplasm. Its subcellular location is the cytoskeleton. The enzyme catalyses L-seryl-[protein] + ATP = O-phospho-L-seryl-[protein] + ADP + H(+). It carries out the reaction L-threonyl-[protein] + ATP = O-phospho-L-threonyl-[protein] + ADP + H(+). In terms of biological role, protein kinase with a significantly reduced Ca(2+)/CAM affinity and dependence compared to other members of the CaMK family. May play a role in the down-regulation of CRE-dependent gene activation probably by phosphorylation of the CREB coactivator CRTC2/TORC2 and the resulting retention of TORC2 in the cytoplasm. The protein is Serine/threonine-protein kinase DCLK2 (DCLK2) of Ailuropoda melanoleuca (Giant panda).